The primary structure comprises 1062 residues: MAPTNTKDSDTPGWLHRHGTSVLGSVARQACKQPIYTLVITALLATMTYTSLLEGSLYNANLTRLSNSHLNQLDVTDFLQGSRSLRLGKATAWQWETDDESMSDQEVRPSFFLDPVASHLALITLVFPTSENNPGISAVQESIISDLAAAQLVSRTPSVLSSTFRETSITLSVPYNNLEEVLRKTQNFPQPEAEHSWTLKNAGKCNSGPKLRLWLIDVLASFVGLIKHAQIIDIIIMLLAYLAMHLTFLSLFMSMRQLGSRFWLAYSVLLSGFFSLFFGLKVTTSSGVSTSMITLSECLPILVIIVGFEKPIRLTRAVLRAATESYLPAKPMARRSTPEAIEVAIMREGWRIVRDYAIEIAILAAGATSRVQGALPQFCFLAAWILLFDSLLLFTFYISVLCVKLEITRIRKHVEPRRALEDDDISTGNQDFDSRVFGCKVKAANISRFKFLMVGGFVLFNVLQLSSLTYGNVRVSDWMPYLSNLSNTLMPAPINPYRVARNGLDDIYVASRANNIETRVTVLPPIKYVLQSQSRHCRDNFAGPLCDTLRGRTLGCVLAWLEDPVISKWVIAALFLSLVLNSYLMKAARWNLRQSEVIPDSSATVSQTKDSSNKLAEKRTVDAMLQEGRVSLLEDEEIVNLCLRGKISAHALEKTMERHPTMSRLEAFTRAVKIRRTVVSRTPSTIDVSSSLEYSKAPFENYDYTLVHGACCENIIGYLPLPVGAAGPLVIDGRNYFIPMATTEGVLVASASRGCKAINAGGGAVTVINADGMTRGPCLAFSSVSRAAEAKQWIDSDEGKKILATAFNSTSRFARLQGLKSAQAGTYLYVRFKSTTGDAMGMNMISKGVEKALEVMKGHGFSDMSTISVTGNYCVDKKPAAINWIDGRGKSVVAEALIPADAVRSVLKTDVDALVELNTAKNLVGSAMAGSIGGFNVHASNLVAAVLLATGQDPAQNVESSSCITIMKNVNNNLHISVSMPCIEVGTIGGGTILEPQAAMLDLLGVRGAHATNPGDNARQLARIVAAAVLAGELSTCAALAAGHLVSAHMAHNRSKVAAKTG.

Topologically, residues 1–34 (MAPTNTKDSDTPGWLHRHGTSVLGSVARQACKQP) are cytoplasmic. A helical transmembrane segment spans residues 35-55 (IYTLVITALLATMTYTSLLEG). The Lumenal segment spans residues 56 to 230 (SLYNANLTRL…SFVGLIKHAQ (175 aa)). Residue asparagine 61 is glycosylated (N-linked (GlcNAc...) asparagine). A helical transmembrane segment spans residues 231-251 (IIDIIIMLLAYLAMHLTFLSL). Positions 233-403 (DIIIMLLAYL…FTFYISVLCV (171 aa)) constitute an SSD domain. At 252-261 (FMSMRQLGSR) the chain is on the cytoplasmic side. The helical transmembrane segment at 262–282 (FWLAYSVLLSGFFSLFFGLKV) threads the bilayer. Residues 283–287 (TTSSG) are Lumenal-facing. The helical transmembrane segment at 288–308 (VSTSMITLSECLPILVIIVGF) threads the bilayer. Topologically, residues 309–355 (EKPIRLTRAVLRAATESYLPAKPMARRSTPEAIEVAIMREGWRIVRD) are cytoplasmic. A helical membrane pass occupies residues 356 to 375 (YAIEIAILAAGATSRVQGAL). The Lumenal segment spans residues 376-377 (PQ). A helical membrane pass occupies residues 378–398 (FCFLAAWILLFDSLLLFTFYI). Over 399–450 (SVLCVKLEITRIRKHVEPRRALEDDDISTGNQDFDSRVFGCKVKAANISRFK) the chain is Cytoplasmic. A helical membrane pass occupies residues 451–471 (FLMVGGFVLFNVLQLSSLTYG). Topologically, residues 472 to 564 (NVRVSDWMPY…GCVLAWLEDP (93 aa)) are lumenal. N-linked (GlcNAc...) asparagine glycosylation is present at asparagine 484. The helical transmembrane segment at 565–585 (VISKWVIAALFLSLVLNSYLM) threads the bilayer. Over 586 to 1062 (KAARWNLRQS…NRSKVAAKTG (477 aa)) the chain is Cytoplasmic. Glutamate 744 acts as the Charge relay system in catalysis. 750–756 (SASRGCK) contacts CoA. NADP(+)-binding positions include 811–813 (SRF) and 838–846 (DAMGMNMIS). The Charge relay system role is filled by lysine 877. 906–908 (VLK) provides a ligand contact to CoA. The Charge relay system role is filled by aspartate 953. 1048–1049 (AH) serves as a coordination point for CoA. Histidine 1049 (proton donor) is an active-site residue. 1053 to 1054 (NR) lines the NADP(+) pocket.

Belongs to the HMG-CoA reductase family.

It localises to the endoplasmic reticulum membrane. The catalysed reaction is (R)-mevalonate + 2 NADP(+) + CoA = (3S)-3-hydroxy-3-methylglutaryl-CoA + 2 NADPH + 2 H(+). Its pathway is metabolic intermediate biosynthesis; (R)-mevalonate biosynthesis; (R)-mevalonate from acetyl-CoA: step 3/3. In terms of biological role, HMG-CoA reductase; part of the first module of ergosterol biosynthesis pathway that includes the early steps of the pathway, conserved across all eukaryotes, and which results in the formation of mevalonate from acetyl-coenzyme A (acetyl-CoA). Hmg1 and hmg2 catalyze the reduction of hydroxymethylglutaryl-CoA (HMG-CoA) to mevalonate. The first module starts with the action of the cytosolic acetyl-CoA acetyltransferase erg10B that catalyzes the formation of acetoacetyl-CoA. The hydroxymethylglutaryl-CoA synthases erg13A and erg13B then condense acetyl-CoA with acetoacetyl-CoA to form HMG-CoA. The rate-limiting step of the early module is the reduction to mevalonate by the 3-hydroxy-3-methylglutaryl-coenzyme A (HMG-CoA) reductases hmg1 and hmg2. Mevalonate is also a precursor for the extracellular siderophore triacetylfusarinine C (TAFC). This Aspergillus fumigatus (strain ATCC MYA-4609 / CBS 101355 / FGSC A1100 / Af293) (Neosartorya fumigata) protein is 3-hydroxy-3-methylglutaryl-coenzyme A reductase 2.